The primary structure comprises 264 residues: Flagellar basal-body rod protein FlgG (264 aa).

Belongs to the flagella basal body rod proteins family. In terms of assembly, the basal body constitutes a major portion of the flagellar organelle and consists of four rings (L,P,S, and M) mounted on a central rod. The rod consists of about 26 subunits of FlgG in the distal portion, and FlgB, FlgC and FlgF are thought to build up the proximal portion of the rod with about 6 subunits each.

The protein localises to the bacterial flagellum basal body. The polypeptide is Flagellar basal-body rod protein FlgG (flgG) (Bacillus subtilis (strain 168)).